The sequence spans 56 residues: Large ribosomal subunit protein bL32c (56 aa).

Residues 1-20 show a composition bias toward basic residues; sequence MAAPKKRTSKSRKNMRKSTW. Residues 1-28 are disordered; that stretch reads MAAPKKRTSKSRKNMRKSTWKRQAATQA.

This sequence belongs to the bacterial ribosomal protein bL32 family.

It localises to the plastid. The protein resides in the chloroplast. The chain is Large ribosomal subunit protein bL32c (rpl32) from Mesostigma viride (Green alga).